The chain runs to 146 residues: Small ribosomal subunit protein bS6 (146 aa).

The tract at residues 106–146 (QAAATQRAAERRAQREAERNAAQAQSSASNQARTAATTSGK) is disordered. Positions 113–124 (AAERRAQREAER) are enriched in basic and acidic residues. The span at 125 to 146 (NAAQAQSSASNQARTAATTSGK) shows a compositional bias: low complexity.

The protein belongs to the bacterial ribosomal protein bS6 family.

Its function is as follows. Binds together with bS18 to 16S ribosomal RNA. This chain is Small ribosomal subunit protein bS6, found in Oenococcus oeni (strain ATCC BAA-331 / PSU-1).